Consider the following 730-residue polypeptide: Hemolytic phospholipase C (730 aa).

Residues 1-38 (MTENWKFRRRTFLKHGAQAATLAGLSGLFPETLRRALA) constitute a signal peptide (tat-type signal).

Belongs to the bacterial phospholipase C family. Post-translationally, predicted to be exported by the Tat system. The position of the signal peptide cleavage has not been experimentally proven.

The enzyme catalyses a 1,2-diacyl-sn-glycero-3-phosphocholine + H2O = phosphocholine + a 1,2-diacyl-sn-glycerol + H(+). Hydrolyzes sphingomyelin in addition to phosphatidylcholine. In Pseudomonas aeruginosa (strain ATCC 15692 / DSM 22644 / CIP 104116 / JCM 14847 / LMG 12228 / 1C / PRS 101 / PAO1), this protein is Hemolytic phospholipase C (plcH).